The following is a 640-amino-acid chain: DNA gyrase subunit B (640 aa).

Positions 423 to 537 constitute a Toprim domain; it reads AELYIVEGDS…NGNIYIAQPP (115 aa). Mg(2+) contacts are provided by Glu-429, Asp-502, and Asp-504.

It belongs to the type II topoisomerase GyrB family. In terms of assembly, heterotetramer, composed of two GyrA and two GyrB chains. In the heterotetramer, GyrA contains the active site tyrosine that forms a transient covalent intermediate with DNA, while GyrB binds cofactors and catalyzes ATP hydrolysis. Mg(2+) serves as cofactor. It depends on Mn(2+) as a cofactor. The cofactor is Ca(2+).

Its subcellular location is the cytoplasm. It catalyses the reaction ATP-dependent breakage, passage and rejoining of double-stranded DNA.. A type II topoisomerase that negatively supercoils closed circular double-stranded (ds) DNA in an ATP-dependent manner to modulate DNA topology and maintain chromosomes in an underwound state. Negative supercoiling favors strand separation, and DNA replication, transcription, recombination and repair, all of which involve strand separation. Also able to catalyze the interconversion of other topological isomers of dsDNA rings, including catenanes and knotted rings. Type II topoisomerases break and join 2 DNA strands simultaneously in an ATP-dependent manner. This chain is DNA gyrase subunit B, found in Spiroplasma citri.